Reading from the N-terminus, the 595-residue chain is O-phosphoseryl-tRNA(Sec) selenium transferase (595 aa).

Arg75 provides a ligand contact to pyridoxal 5'-phosphate. Residues Gly96–Pro106 form a phosphate loop (P-loop) region. The substrate site is built by Arg97, Ser98, and Gln105. Over residues Arg174–Ala187 the composition is skewed to polar residues. 2 disordered regions span residues Arg174 to Pro208 and Ser257 to Ser278. The segment covering Glu196–Thr205 has biased composition (basic and acidic residues). TRNA is bound at residue Arg358. At Lys371 the chain carries N6-(pyridoxal phosphate)lysine. Position 400 (Arg400) interacts with substrate.

This sequence belongs to the SepSecS family. As to quaternary structure, homotetramer composed of two homodimers. Requires pyridoxal 5'-phosphate as cofactor.

It is found in the cytoplasm. The enzyme catalyses O-phospho-L-seryl-tRNA(Sec) + selenophosphate + H2O = L-selenocysteinyl-tRNA(Sec) + 2 phosphate. Its pathway is aminoacyl-tRNA biosynthesis; selenocysteinyl-tRNA(Sec) biosynthesis; selenocysteinyl-tRNA(Sec) from L-seryl-tRNA(Sec) (archaeal/eukaryal route): step 2/2. In terms of biological role, converts O-phosphoseryl-tRNA(Sec) to selenocysteinyl-tRNA(Sec) required for selenoprotein biosynthesis. This Leishmania donovani protein is O-phosphoseryl-tRNA(Sec) selenium transferase.